The chain runs to 387 residues: Erythronate-4-phosphate dehydrogenase (387 aa).

Residues S45 and T67 each coordinate substrate. D147 contributes to the NAD(+) binding site. The active site involves R208. D232 provides a ligand contact to NAD(+). E237 is an active-site residue. The Proton donor role is filled by H254. G257 contributes to the NAD(+) binding site. Y258 contacts substrate.

It belongs to the D-isomer specific 2-hydroxyacid dehydrogenase family. PdxB subfamily. Homodimer.

It is found in the cytoplasm. It catalyses the reaction 4-phospho-D-erythronate + NAD(+) = (R)-3-hydroxy-2-oxo-4-phosphooxybutanoate + NADH + H(+). Its pathway is cofactor biosynthesis; pyridoxine 5'-phosphate biosynthesis; pyridoxine 5'-phosphate from D-erythrose 4-phosphate: step 2/5. Functionally, catalyzes the oxidation of erythronate-4-phosphate to 3-hydroxy-2-oxo-4-phosphonooxybutanoate. The sequence is that of Erythronate-4-phosphate dehydrogenase from Shewanella sediminis (strain HAW-EB3).